A 104-amino-acid polypeptide reads, in one-letter code: Large ribosomal subunit protein uL24 (104 aa).

It belongs to the universal ribosomal protein uL24 family. As to quaternary structure, part of the 50S ribosomal subunit.

Functionally, one of two assembly initiator proteins, it binds directly to the 5'-end of the 23S rRNA, where it nucleates assembly of the 50S subunit. In terms of biological role, one of the proteins that surrounds the polypeptide exit tunnel on the outside of the subunit. The sequence is that of Large ribosomal subunit protein uL24 from Shigella dysenteriae serotype 1 (strain Sd197).